Reading from the N-terminus, the 153-residue chain is uncharacterized protein (153 aa).

The signal sequence occupies residues 1-19; the sequence is MKACLLLFFYFSFICQLHG.

This is an uncharacterized protein from Escherichia coli (strain K12).